The sequence spans 320 residues: MQTINTFSWIKEQITRSISISLILYIITRSSIANAYPIFAQQGYENPREATGRIVCANCHLANKPVDIEVPQAVLPDTVFEAVVRIPYDMQLKQVLANGKKGGLNVGAVLILPEGFELAPPDRISPEMKEKMGNLSFQSYRPNKQNILVIGPVPGQKYSEITFPILAPDPATKKDVHFLKYPIYVGGNRGRGQIYPDGSKSNNTVYNSTATGIVKKIVRKEKGGYEINIADASDGREVVDIIPRGPELLVSEGESIKLDQPLTSNPNVGGFGQGDAEVVLQDPLRIQGLLFFFASVILAQIFLVLKKKQFEKVQLSEMNF.

Positions 1 to 35 are cleaved as a signal peptide; the sequence is MQTINTFSWIKEQITRSISISLILYIITRSSIANA. Heme-binding residues include Tyr-36, Cys-56, Cys-59, and His-60. The helical transmembrane segment at 286–305 threads the bilayer; that stretch reads IQGLLFFFASVILAQIFLVL.

This sequence belongs to the cytochrome f family. The 4 large subunits of the cytochrome b6-f complex are cytochrome b6, subunit IV (17 kDa polypeptide, petD), cytochrome f and the Rieske protein, while the 4 small subunits are PetG, PetL, PetM and PetN. The complex functions as a dimer. The cofactor is heme.

It localises to the plastid. The protein localises to the chloroplast thylakoid membrane. Its function is as follows. Component of the cytochrome b6-f complex, which mediates electron transfer between photosystem II (PSII) and photosystem I (PSI), cyclic electron flow around PSI, and state transitions. In Spinacia oleracea (Spinach), this protein is Cytochrome f (petA).